A 455-amino-acid chain; its full sequence is Probable alpha-galactosidase B (455 aa).

Positions 1-16 (MIEFLALITLISRANA) are cleaved as a signal peptide. Intrachain disulfides connect Cys-39/Cys-71 and Cys-121/Cys-151. Residue Asn-42 is glycosylated (N-linked (GlcNAc...) asparagine). The active-site Nucleophile is the Asp-149. Asn-177 and Asn-192 each carry an N-linked (GlcNAc...) asparagine glycan. 222–226 (NWGNA) provides a ligand contact to substrate. Asp-244 serves as the catalytic Proton donor. N-linked (GlcNAc...) asparagine glycosylation occurs at Asn-395.

This sequence belongs to the glycosyl hydrolase 27 family.

The protein resides in the secreted. It carries out the reaction Hydrolysis of terminal, non-reducing alpha-D-galactose residues in alpha-D-galactosides, including galactose oligosaccharides, galactomannans and galactolipids.. Functionally, hydrolyzes a variety of simple alpha-D-galactoside as well as more complex molecules such as oligosaccharides and polysaccharides. This is Probable alpha-galactosidase B (aglB) from Emericella nidulans (strain FGSC A4 / ATCC 38163 / CBS 112.46 / NRRL 194 / M139) (Aspergillus nidulans).